The following is a 339-amino-acid chain: Anthranilate phosphoribosyltransferase (339 aa).

5-phospho-alpha-D-ribose 1-diphosphate contacts are provided by residues Gly82, 85–86, 92–95, 110–118, and Ser122; these read GD, NIST, and KHGNRGISS. An anthranilate-binding site is contributed by Gly82. Ser94 is a Mg(2+) binding site. Asn113 is an anthranilate binding site. Arg168 is an anthranilate binding site. The Mg(2+) site is built by Asp227 and Glu228.

This sequence belongs to the anthranilate phosphoribosyltransferase family. As to quaternary structure, homodimer. It depends on Mg(2+) as a cofactor.

It carries out the reaction N-(5-phospho-beta-D-ribosyl)anthranilate + diphosphate = 5-phospho-alpha-D-ribose 1-diphosphate + anthranilate. It participates in amino-acid biosynthesis; L-tryptophan biosynthesis; L-tryptophan from chorismate: step 2/5. Its function is as follows. Catalyzes the transfer of the phosphoribosyl group of 5-phosphorylribose-1-pyrophosphate (PRPP) to anthranilate to yield N-(5'-phosphoribosyl)-anthranilate (PRA). The sequence is that of Anthranilate phosphoribosyltransferase from Vesicomyosocius okutanii subsp. Calyptogena okutanii (strain HA).